A 220-amino-acid polypeptide reads, in one-letter code: Riboflavin kinase (220 aa).

Residues 1–92 are H-T-H motif-like; it reads METDDQYYRA…LSRILAIKNN (92 aa). Positions 93 to 220 are riboflavin kinase; sequence VVITGTVTSG…GDRVSVEVYT (128 aa). CDP is bound at residue 102–107; the sequence is GMGEGR. Residues threonine 131 and asparagine 133 each contribute to the Mg(2+) site. The FMN site is built by threonine 188 and glutamate 195. A CDP-binding site is contributed by 200–203; it reads KYLR.

It belongs to the archaeal riboflavin kinase family. It depends on Mg(2+) as a cofactor.

It carries out the reaction riboflavin + CTP = CDP + FMN + H(+). The protein operates within cofactor biosynthesis; FMN biosynthesis; FMN from riboflavin (CTP route): step 1/1. In terms of biological role, catalyzes the CTP-dependent phosphorylation of riboflavin (vitamin B2) to form flavin mononucleotide (FMN). In Thermoplasma acidophilum (strain ATCC 25905 / DSM 1728 / JCM 9062 / NBRC 15155 / AMRC-C165), this protein is Riboflavin kinase (ribK).